The primary structure comprises 660 residues: Bifunctional polymyxin resistance protein ArnA (660 aa).

Residues 1–304 form a formyltransferase ArnAFT region; it reads MKAVIFAYHD…TLGLVAGARL (304 aa). The active-site Proton donor; for formyltransferase activity is the H104. (6R)-10-formyltetrahydrofolate-binding positions include R114 and 136–140; that span reads VKRAD. The dehydrogenase ArnADH stretch occupies residues 314-660; that stretch reads RRIRVLILGV…RSVDVAERAS (347 aa). NAD(+) contacts are provided by residues D347 and 368–369; that span reads DI. Residues A393, Y398, and 432–433 contribute to the UDP-alpha-D-glucuronate site; that span reads TS. E434 serves as the catalytic Proton acceptor; for decarboxylase activity. UDP-alpha-D-glucuronate contacts are provided by residues R460, N492, 526–535, and Y613; that span reads KLIDGGQQKR. Residue R619 is the Proton donor; for decarboxylase activity of the active site.

It in the N-terminal section; belongs to the Fmt family. UDP-L-Ara4N formyltransferase subfamily. The protein in the C-terminal section; belongs to the NAD(P)-dependent epimerase/dehydratase family. UDP-glucuronic acid decarboxylase subfamily. Homohexamer, formed by a dimer of trimers.

The catalysed reaction is UDP-alpha-D-glucuronate + NAD(+) = UDP-beta-L-threo-pentopyranos-4-ulose + CO2 + NADH. It catalyses the reaction UDP-4-amino-4-deoxy-beta-L-arabinose + (6R)-10-formyltetrahydrofolate = UDP-4-deoxy-4-formamido-beta-L-arabinose + (6S)-5,6,7,8-tetrahydrofolate + H(+). Its pathway is nucleotide-sugar biosynthesis; UDP-4-deoxy-4-formamido-beta-L-arabinose biosynthesis; UDP-4-deoxy-4-formamido-beta-L-arabinose from UDP-alpha-D-glucuronate: step 1/3. The protein operates within nucleotide-sugar biosynthesis; UDP-4-deoxy-4-formamido-beta-L-arabinose biosynthesis; UDP-4-deoxy-4-formamido-beta-L-arabinose from UDP-alpha-D-glucuronate: step 3/3. It participates in bacterial outer membrane biogenesis; lipopolysaccharide biosynthesis. Bifunctional enzyme that catalyzes the oxidative decarboxylation of UDP-glucuronic acid (UDP-GlcUA) to UDP-4-keto-arabinose (UDP-Ara4O) and the addition of a formyl group to UDP-4-amino-4-deoxy-L-arabinose (UDP-L-Ara4N) to form UDP-L-4-formamido-arabinose (UDP-L-Ara4FN). The modified arabinose is attached to lipid A and is required for resistance to polymyxin and cationic antimicrobial peptides. This Salmonella paratyphi B (strain ATCC BAA-1250 / SPB7) protein is Bifunctional polymyxin resistance protein ArnA.